Consider the following 451-residue polypeptide: Trigger factor (451 aa).

Residues 170 to 256 (DHIATIDYCE…LTALKYKDLP (87 aa)) enclose the PPIase FKBP-type domain.

This sequence belongs to the FKBP-type PPIase family. Tig subfamily.

It localises to the cytoplasm. It carries out the reaction [protein]-peptidylproline (omega=180) = [protein]-peptidylproline (omega=0). Functionally, involved in protein export. Acts as a chaperone by maintaining the newly synthesized protein in an open conformation. Functions as a peptidyl-prolyl cis-trans isomerase. In Treponema denticola (strain ATCC 35405 / DSM 14222 / CIP 103919 / JCM 8153 / KCTC 15104), this protein is Trigger factor.